The chain runs to 68 residues: Coiled-coil domain-containing protein 179 (68 aa).

Positions 11–68 (SQVNPEGPRQHHPSEVTERQLANKRIQNMQHLKKEKRRLNKRFSRPSPIPEPGLLWSS) are disordered. Residues 18-28 (PRQHHPSEVTE) are compositionally biased toward basic and acidic residues. Positions 27–53 (TERQLANKRIQNMQHLKKEKRRLNKRF) form a coiled coil. Residues 41-54 (HLKKEKRRLNKRFS) show a composition bias toward basic residues.

In Homo sapiens (Human), this protein is Coiled-coil domain-containing protein 179 (CCDC179).